The sequence spans 518 residues: MVFPVEAIVGLVTFTFLFYFLWTKKSQKPSKPLPPKIPGGWPVIGHLFYFDDDGDDRPLARKLGDLADKYGPVFTFRLGLPLVLVVSSYEAIKDCFSTNDAIFSNRPAFLYGEYLGYKNAMLFLANYGSYWRKNRKLIIQEVLSASRLEKFKHVRFARIQTSIKNLYTRIDGNSSTINLTDWLEELNFGLIVKMIAGKNYESGKGDEQVERFKKAFKDFMILSMEFVLWDAFPIPLFKWVDFQGHVKAMKRTFKDIDSVFQNWLEEHIKKREKIMEVGTEGNEQDFIDVVLSKMSNEYLGEGYSRDTVIKATVFSLVLDAADTVALHINCGMALLINNQNALKKAQEEIDTKVGKDRWVEESDIKDLVYLQAIVKEVLRLYPPGPLLVPHENVEDCVVSGYHIPKGTRLFANVMKLQRDPKLWSNPDKFNPERFIARDIDFHGQHYEYIPFGSGRRSCPGMTYALQVEHLTMAHLIQGFNYRTPTDEPLDMKEGAGITIRKVNPVKVIITPRLAPELY.

Residues 2-22 (VFPVEAIVGLVTFTFLFYFLW) form a helical membrane-spanning segment. A Glycyl lysine isopeptide (Lys-Gly) (interchain with G-Cter in ubiquitin) cross-link involves residue K254. A heme-binding site is contributed by C458.

Belongs to the cytochrome P450 family. CYP82E2 subfamily. It depends on heme as a cofactor. Expressed at low levels in green leaves.

It is found in the membrane. It participates in alkaloid biosynthesis; nicotine biosynthesis. In terms of biological role, no nicotine N-demethylase activity. The chain is Cytochrome P450 82E3 from Nicotiana tabacum (Common tobacco).